A 306-amino-acid polypeptide reads, in one-letter code: Ribosomal RNA small subunit methyltransferase H (306 aa).

S-adenosyl-L-methionine is bound by residues 33–35, Asp51, Phe78, Asp96, and Gln103; that span reads GGY.

It belongs to the methyltransferase superfamily. RsmH family.

The protein localises to the cytoplasm. The enzyme catalyses cytidine(1402) in 16S rRNA + S-adenosyl-L-methionine = N(4)-methylcytidine(1402) in 16S rRNA + S-adenosyl-L-homocysteine + H(+). Its function is as follows. Specifically methylates the N4 position of cytidine in position 1402 (C1402) of 16S rRNA. The chain is Ribosomal RNA small subunit methyltransferase H from Rickettsia prowazekii (strain Madrid E).